The following is a 311-amino-acid chain: 4-hydroxy-3-methylbut-2-enyl diphosphate reductase (311 aa).

Residue cysteine 12 participates in [4Fe-4S] cluster binding. The (2E)-4-hydroxy-3-methylbut-2-enyl diphosphate site is built by histidine 41 and histidine 74. Dimethylallyl diphosphate-binding residues include histidine 41 and histidine 74. Residues histidine 41 and histidine 74 each contribute to the isopentenyl diphosphate site. Position 96 (cysteine 96) interacts with [4Fe-4S] cluster. Histidine 124 is a (2E)-4-hydroxy-3-methylbut-2-enyl diphosphate binding site. Histidine 124 is a dimethylallyl diphosphate binding site. Isopentenyl diphosphate is bound at residue histidine 124. The Proton donor role is filled by glutamate 126. (2E)-4-hydroxy-3-methylbut-2-enyl diphosphate is bound at residue threonine 168. Position 198 (cysteine 198) interacts with [4Fe-4S] cluster. (2E)-4-hydroxy-3-methylbut-2-enyl diphosphate-binding residues include serine 226, serine 227, asparagine 228, and serine 270. Dimethylallyl diphosphate-binding residues include serine 226, serine 227, asparagine 228, and serine 270. Residues serine 226, serine 227, asparagine 228, and serine 270 each contribute to the isopentenyl diphosphate site.

This sequence belongs to the IspH family. It depends on [4Fe-4S] cluster as a cofactor.

The enzyme catalyses isopentenyl diphosphate + 2 oxidized [2Fe-2S]-[ferredoxin] + H2O = (2E)-4-hydroxy-3-methylbut-2-enyl diphosphate + 2 reduced [2Fe-2S]-[ferredoxin] + 2 H(+). The catalysed reaction is dimethylallyl diphosphate + 2 oxidized [2Fe-2S]-[ferredoxin] + H2O = (2E)-4-hydroxy-3-methylbut-2-enyl diphosphate + 2 reduced [2Fe-2S]-[ferredoxin] + 2 H(+). Its pathway is isoprenoid biosynthesis; dimethylallyl diphosphate biosynthesis; dimethylallyl diphosphate from (2E)-4-hydroxy-3-methylbutenyl diphosphate: step 1/1. It participates in isoprenoid biosynthesis; isopentenyl diphosphate biosynthesis via DXP pathway; isopentenyl diphosphate from 1-deoxy-D-xylulose 5-phosphate: step 6/6. Functionally, catalyzes the conversion of 1-hydroxy-2-methyl-2-(E)-butenyl 4-diphosphate (HMBPP) into a mixture of isopentenyl diphosphate (IPP) and dimethylallyl diphosphate (DMAPP). Acts in the terminal step of the DOXP/MEP pathway for isoprenoid precursor biosynthesis. This Saccharophagus degradans (strain 2-40 / ATCC 43961 / DSM 17024) protein is 4-hydroxy-3-methylbut-2-enyl diphosphate reductase.